The sequence spans 32 residues: Cytochrome b6-f complex subunit 7 (32 aa).

A helical transmembrane segment spans residues Ala9 to Leu27.

The protein belongs to the PetM family. The 4 large subunits of the cytochrome b6-f complex are cytochrome b6, subunit IV (17 kDa polypeptide, PetD), cytochrome f and the Rieske protein, while the 4 small subunits are PetG, PetL, PetM and PetN. The complex functions as a dimer.

Its subcellular location is the cellular thylakoid membrane. Functionally, component of the cytochrome b6-f complex, which mediates electron transfer between photosystem II (PSII) and photosystem I (PSI), cyclic electron flow around PSI, and state transitions. The sequence is that of Cytochrome b6-f complex subunit 7 from Prochlorococcus marinus (strain MIT 9303).